Here is a 311-residue protein sequence, read N- to C-terminus: Olfactory receptor 1D4 (311 aa).

The Extracellular segment spans residues 1–25; sequence MDGDNQSENSQFLLLGISESPEQQQ. Asn5 carries an N-linked (GlcNAc...) asparagine glycan. A helical membrane pass occupies residues 26 to 49; the sequence is ILFWMFLSMYLVTVLGNVLIILAI. Over 50–57 the chain is Cytoplasmic; that stretch reads SSDSHLHT. A helical transmembrane segment spans residues 58–79; the sequence is PMYFFLANLSFTDLFFVTNTIP. Residues 80-100 are Extracellular-facing; the sequence is KMLVNFQSQNKAISYAGCLTQ. A disulfide bond links Cys97 and Cys189. The chain crosses the membrane as a helical span at residues 101-120; sequence LYFLVSLVTLDNLILAVMAY. The Cytoplasmic portion of the chain corresponds to 121–140; the sequence is DRYVAICCPLHYVTAMSPGL. Residues 141–158 form a helical membrane-spanning segment; the sequence is CVLLLSLCWGLSVLYGLL. Residues 159–196 are Extracellular-facing; the sequence is LTFLLTRVTFCGPREIHYLFCDMYILLWLACSNTHIIH. Residues 197-220 traverse the membrane as a helical segment; sequence TALIATGCFIFLTLLGFMTTSYVR. Residues 221–237 lie on the Cytoplasmic side of the membrane; the sequence is IVRTILQMPSASKKYKT. Residues 238–260 traverse the membrane as a helical segment; the sequence is FSTCASHLGVVSLFYGTLAMVYL. Residues 261–271 lie on the Extracellular side of the membrane; that stretch reads QPLHTYSMKDS. A helical transmembrane segment spans residues 272–291; that stretch reads VATVMYAVLTPMMNPFIYSL. The Cytoplasmic portion of the chain corresponds to 292–311; the sequence is RNKDMHGAPGRVLWRPFQRP.

This sequence belongs to the G-protein coupled receptor 1 family.

Its subcellular location is the cell membrane. Its function is as follows. Odorant receptor. The protein is Olfactory receptor 1D4 (OR1D4) of Homo sapiens (Human).